Here is an 812-residue protein sequence, read N- to C-terminus: Fibrous sheath CABYR-binding protein (812 aa).

A disordered region spans residues 1–66 (MEESDEPEQP…SIGNIPGGKA (66 aa)). A phosphoserine mark is found at Ser25, Ser57, Ser125, Ser133, Ser184, and Ser273. 4 disordered regions span residues 269 to 333 (IQAP…PKGT), 367 to 388 (DSGR…PPLS), 424 to 547 (FEDQ…PPSL), and 672 to 741 (PAEE…PSVK). The span at 275–286 (AKETSAAETTAK) shows a compositional bias: low complexity. Residues 488–501 (EVPPLPTEEWPLPP) are compositionally biased toward pro residues. Low complexity predominate over residues 502-513 (VTEESPAEVTPP). The segment covering 514 to 528 (ETEEGPIEPAEEGPE) has biased composition (acidic residues).

Interacts with CABYR.

It localises to the cell projection. It is found in the cilium. The protein resides in the flagellum. Functionally, may be involved in the later stages of fibrous sheath biogenesis. Binds calcium. This Rattus norvegicus (Rat) protein is Fibrous sheath CABYR-binding protein.